The sequence spans 66 residues: Large ribosomal subunit protein uL29 (66 aa).

It belongs to the universal ribosomal protein uL29 family.

In Francisella philomiragia subsp. philomiragia (strain ATCC 25017 / CCUG 19701 / FSC 153 / O#319-036), this protein is Large ribosomal subunit protein uL29.